The following is a 493-amino-acid chain: EGF-containing fibulin-like extracellular matrix protein 1 (493 aa).

A signal peptide spans 1–17 (MLKALFLTMLTLALVKS). Residues 26–71 (YTQCTDGYEWDPVRQQCKDIDECDIVPDACKGGMKCVNHYGGYLCL) enclose the EGF-like 1; atypical domain. Positions 173–213 (DIDECTAGTHNCRADQVCINLRGSFACQCPPGYQKRGEQCV) constitute an EGF-like 2; calcium-binding domain. 15 disulfides stabilise this stretch: cysteine 177/cysteine 190, cysteine 184/cysteine 199, cysteine 201/cysteine 212, cysteine 218/cysteine 228, cysteine 224/cysteine 237, cysteine 239/cysteine 252, cysteine 258/cysteine 268, cysteine 264/cysteine 277, cysteine 279/cysteine 292, cysteine 298/cysteine 309, cysteine 305/cysteine 318, cysteine 320/cysteine 332, cysteine 338/cysteine 350, cysteine 344/cysteine 359, and cysteine 365/cysteine 377. Residues 214–253 (DIDECTIPPYCHQRCVNTPGSFYCQCSPGFQLAANNYTCV) enclose the EGF-like 3; calcium-binding domain. The N-linked (GlcNAc...) asparagine glycan is linked to asparagine 249. The region spanning 254-293 (DINECDASNQCAQQCYNILGSFICQCNQGYELSSDRLNCE) is the EGF-like 4; calcium-binding domain. The tract at residues 259–493 (DASNQCAQQC…LTIIVGPFSF (235 aa)) is mediates interaction with TIMP3. In terms of domain architecture, EGF-like 5; calcium-binding spans 294-333 (DIDECRTSSYLCQYQCVNEPGKFSCMCPQGYQVVRSRTCQ). The region spanning 334 to 378 (DINECETTNECREDEMCWNYHGGFRCYPRNPCQDPYILTPENRCV) is the EGF-like 6; calcium-binding domain.

It belongs to the fibulin family. As to quaternary structure, interacts with ECM1. Interacts with TIMP3. In terms of tissue distribution, in the eye, associated with photoreceptor outer and inner segment regions, the nerve fiber layer, outer nuclear layer and inner and outer plexiform layers of the retina.

Its subcellular location is the secreted. The protein localises to the extracellular space. It localises to the extracellular matrix. Binds EGFR, the EGF receptor, inducing EGFR autophosphorylation and the activation of downstream signaling pathways. May play a role in cell adhesion and migration. May function as a negative regulator of chondrocyte differentiation. In the olfactory epithelium, it may regulate glial cell migration, differentiation and the ability of glial cells to support neuronal neurite outgrowth. The chain is EGF-containing fibulin-like extracellular matrix protein 1 (EFEMP1) from Homo sapiens (Human).